The chain runs to 227 residues: Terpene cyclase ltmB (227 aa).

The next 7 membrane-spanning stretches (helical) occupy residues 20-40 (LAETFVTFMGLGWLINYVLMI), 51-71 (MALIPLCNNIAWELVYTIIYP), 76-96 (VELAAFIAGVTLNFLIMTSAA), 113-133 (AGLIIVAGILMCFTGHVALAM), 135-155 (IGPALAYSWGAVICQLALSIG), 173-195 (LWSSRFLGSCCAVGFAFLRWRYW), and 206-226 (LILWSLATFLVADLTYGVCLL).

The protein belongs to the paxB family.

Its subcellular location is the membrane. It functions in the pathway secondary metabolite biosynthesis. Functionally, terpene cyclase; part of the gene cluster that mediates the biosynthesis of lolitrems, indole-diterpene mycotoxins that are potent tremorgens in mammals, and are synthesized by clavicipitaceous fungal endophytes in association with their grass hosts. The geranylgeranyl diphosphate (GGPP) synthase ltmG is proposed to catalyze the first step in lolitrem biosynthesis. LtmG catalyzes a series of iterative condensations of isopentenyl diphosphate (IPP) with dimethylallyl diphosphate (DMAPP), geranyl diphosphate (GPP), and farnesyl diphosphate (FPP), to form GGPP. GGPP then condenses with indole-3-glycerol phosphate to form 3-geranylgeranylindole, an acyclic intermediate, to be incorporated into paxilline. Either ltmG or ltmC could be responsible for this step, as both are putative prenyl transferases. The FAD-dependent monooxygenase ltmM then catalyzes the epoxidation of the two terminal alkenes of the geranylgeranyl moiety, which is subsequently cyclized by ltmB, to paspaline. The cytochrome P450 monooxygenases ltmQ and ltmP can sequentially oxidize paspaline to terpendole E and terpendole F. Alternatively, ltmP converts paspaline to an intermediate which is oxidized by ltmQ to terpendole F. LtmF, ltmK, ltmE and ltmJ appear to be unique to the epichloe endophytes. The prenyltransferase ltmF is involved in the 27-hydroxyl-O-prenylation. The cytochrome P450 monooxygenase ltmK is required for the oxidative acetal ring formation. The multi-functional prenyltransferase ltmE is required for C20- and C21-prenylations of the indole ring of paspalanes and acts together with the cytochrome P450 monooxygenase ltmJ to yield lolitremanes by multiple oxidations and ring closures. The stereoisomer pairs of lolitriol and lolitrem N or lolitrem B and lolitrem F may be attributed to variations in the way in which ring closure can occur under the action of ltmJ. While the major product of this pathway is lolitrem B, the prenyl transferases and cytochrome P450 monooxygenases identified in this pathway have a remarkable versatility in their regio- and stereo-specificities to generate a diverse range of metabolites that are products of a metabolic grid rather than a linear pathway. The chain is Terpene cyclase ltmB from Epichloe festucae var. lolii (Neotyphodium lolii).